Reading from the N-terminus, the 82-residue chain is Small ribosomal subunit protein bS16 (82 aa).

This sequence belongs to the bacterial ribosomal protein bS16 family.

This is Small ribosomal subunit protein bS16 from Pectobacterium carotovorum subsp. carotovorum (strain PC1).